A 227-amino-acid chain; its full sequence is Cytochrome c biogenesis ATP-binding export protein CcmA (227 aa).

An ABC transporter domain is found at 26–227 (LAASGLGFSR…ARTLRLDARS (202 aa)). Residue 58 to 65 (GANGSGKT) coordinates ATP.

It belongs to the ABC transporter superfamily. CcmA exporter (TC 3.A.1.107) family. In terms of assembly, the complex is composed of two ATP-binding proteins (CcmA) and two transmembrane proteins (CcmB).

The protein localises to the cell inner membrane. It carries out the reaction heme b(in) + ATP + H2O = heme b(out) + ADP + phosphate + H(+). Functionally, part of the ABC transporter complex CcmAB involved in the biogenesis of c-type cytochromes; once thought to export heme, this seems not to be the case, but its exact role is uncertain. Responsible for energy coupling to the transport system. This chain is Cytochrome c biogenesis ATP-binding export protein CcmA, found in Cupriavidus necator (strain ATCC 17699 / DSM 428 / KCTC 22496 / NCIMB 10442 / H16 / Stanier 337) (Ralstonia eutropha).